A 256-amino-acid polypeptide reads, in one-letter code: Enolase-phosphatase E1 (256 aa).

Residues aspartate 14 and glutamate 16 each coordinate Mg(2+). Substrate-binding positions include 142-143 and lysine 176; that span reads SS. Aspartate 201 provides a ligand contact to Mg(2+).

Belongs to the HAD-like hydrolase superfamily. MasA/MtnC family. In terms of assembly, monomer. Requires Mg(2+) as cofactor.

The protein localises to the cytoplasm. The protein resides in the nucleus. It catalyses the reaction 5-methylsulfanyl-2,3-dioxopentyl phosphate + H2O = 1,2-dihydroxy-5-(methylsulfanyl)pent-1-en-3-one + phosphate. It functions in the pathway amino-acid biosynthesis; L-methionine biosynthesis via salvage pathway; L-methionine from S-methyl-5-thio-alpha-D-ribose 1-phosphate: step 3/6. The protein operates within amino-acid biosynthesis; L-methionine biosynthesis via salvage pathway; L-methionine from S-methyl-5-thio-alpha-D-ribose 1-phosphate: step 4/6. In terms of biological role, bifunctional enzyme that catalyzes the enolization of 2,3-diketo-5-methylthiopentyl-1-phosphate (DK-MTP-1-P) into the intermediate 2-hydroxy-3-keto-5-methylthiopentenyl-1-phosphate (HK-MTPenyl-1-P), which is then dephosphorylated to form the acireductone 1,2-dihydroxy-3-keto-5-methylthiopentene (DHK-MTPene). This Drosophila yakuba (Fruit fly) protein is Enolase-phosphatase E1.